Consider the following 124-residue polypeptide: CRISPR-associated endoribonuclease Cas2 4 (124 aa).

Asp40 contacts Mg(2+).

The protein belongs to the CRISPR-associated endoribonuclease Cas2 protein family. Homodimer, forms a heterotetramer with a Cas1 homodimer. The cofactor is Mg(2+).

Its function is as follows. CRISPR (clustered regularly interspaced short palindromic repeat), is an adaptive immune system that provides protection against mobile genetic elements (viruses, transposable elements and conjugative plasmids). CRISPR clusters contain sequences complementary to antecedent mobile elements and target invading nucleic acids. CRISPR clusters are transcribed and processed into CRISPR RNA (crRNA). Functions as a ssRNA-specific endoribonuclease. Involved in the integration of spacer DNA into the CRISPR cassette. In Rhodospirillum rubrum (strain ATCC 11170 / ATH 1.1.1 / DSM 467 / LMG 4362 / NCIMB 8255 / S1), this protein is CRISPR-associated endoribonuclease Cas2 4.